The chain runs to 366 residues: tRNA/tmRNA (uracil-C(5))-methyltransferase (366 aa).

S-adenosyl-L-methionine-binding residues include glutamine 190, tyrosine 218, asparagine 223, glutamate 239, and aspartate 299. Residue cysteine 324 is the Nucleophile of the active site. Glutamate 358 acts as the Proton acceptor in catalysis.

The protein belongs to the class I-like SAM-binding methyltransferase superfamily. RNA M5U methyltransferase family. TrmA subfamily.

It catalyses the reaction uridine(54) in tRNA + S-adenosyl-L-methionine = 5-methyluridine(54) in tRNA + S-adenosyl-L-homocysteine + H(+). The catalysed reaction is uridine(341) in tmRNA + S-adenosyl-L-methionine = 5-methyluridine(341) in tmRNA + S-adenosyl-L-homocysteine + H(+). Dual-specificity methyltransferase that catalyzes the formation of 5-methyluridine at position 54 (m5U54) in all tRNAs, and that of position 341 (m5U341) in tmRNA (transfer-mRNA). This Cronobacter sakazakii (strain ATCC BAA-894) (Enterobacter sakazakii) protein is tRNA/tmRNA (uracil-C(5))-methyltransferase.